A 245-amino-acid polypeptide reads, in one-letter code: Transcriptional activator protein ExpR (245 aa).

Positions 173–238 constitute an HTH luxR-type domain; it reads RSNDKDIFSQ…HAIRLGIELQ (66 aa). The segment at residues 197 to 216 is a DNA-binding region (H-T-H motif); sequence YQEIALILDIKTGTVKFHIG.

It belongs to the autoinducer-regulated transcriptional regulatory protein family.

In terms of biological role, functions as an OHLL responsive transcriptional regulator that acts in virulence (soft rot disease) through the activation of genes for plant tissue macerating enzymes. In Pectobacterium parmentieri, this protein is Transcriptional activator protein ExpR (expR).